A 469-amino-acid polypeptide reads, in one-letter code: Dihydrolipoyl dehydrogenase (469 aa).

Residues 40 to 48, lysine 57, and alanine 120 each bind FAD; that span reads EKASLGGVC. Cysteines 48 and 53 form a disulfide. NAD(+)-binding positions include 186 to 190, glutamate 209, and 275 to 278; these read GGGAI and AVGV. FAD-binding residues include aspartate 317 and alanine 325. Histidine 450 (proton acceptor) is an active-site residue.

This sequence belongs to the class-I pyridine nucleotide-disulfide oxidoreductase family. Homodimer. Requires FAD as cofactor.

Its subcellular location is the cytoplasm. The catalysed reaction is N(6)-[(R)-dihydrolipoyl]-L-lysyl-[protein] + NAD(+) = N(6)-[(R)-lipoyl]-L-lysyl-[protein] + NADH + H(+). Its function is as follows. Lipoamide dehydrogenase is a component of the alpha-ketoacid dehydrogenase complexes. The chain is Dihydrolipoyl dehydrogenase (lpd) from Chlorobaculum parvum (strain DSM 263 / NCIMB 8327) (Chlorobium vibrioforme subsp. thiosulfatophilum).